Consider the following 234-residue polypeptide: Peptidase E (234 aa).

Residues Ser-123, Asp-138, and His-160 each act as charge relay system in the active site.

It belongs to the peptidase S51 family.

It localises to the cytoplasm. The enzyme catalyses Dipeptidase E catalyzes the hydrolysis of dipeptides Asp-|-Xaa. It does not act on peptides with N-terminal Glu, Asn or Gln, nor does it cleave isoaspartyl peptides.. Its function is as follows. Hydrolyzes dipeptides containing N-terminal aspartate residues. May play a role in allowing the cell to use peptide aspartate to spare carbon otherwise required for the synthesis of the aspartate family of amino acids. The chain is Peptidase E from Actinobacillus pleuropneumoniae serotype 7 (strain AP76).